The chain runs to 1964 residues: Neurogenic locus notch homolog protein 4 (1964 aa).

A signal peptide spans 1–20 (MQPQLLLLLLLPLNFPVILT). EGF-like domains follow at residues 21–60 (RELLCGGSPEPCANGGTCLRLSRGQGICQCAPGFLGETCQ), 61–112 (FPDP…DRCQ), 115–152 (LEELCPPSFCSNGGHCYVQASGRPQCSCEPGWTGEQCQ), and 153–189 (LRDFCSANPCANGGVCLATYPQIQCRCPPGFEGHTCE). Over 21–1443 (RELLCGGSPE…TRPSANQLPW (1423 aa)) the chain is Extracellular. Intrachain disulfides connect Cys-25-Cys-38, Cys-32-Cys-48, Cys-50-Cys-59, Cys-65-Cys-77, Cys-71-Cys-100, Cys-102-Cys-111, Cys-119-Cys-130, Cys-124-Cys-140, Cys-142-Cys-151, Cys-157-Cys-168, Cys-162-Cys-177, Cys-179-Cys-188, Cys-195-Cys-208, Cys-202-Cys-217, Cys-219-Cys-228, Cys-235-Cys-246, Cys-240-Cys-259, Cys-261-Cys-270, Cys-277-Cys-288, Cys-282-Cys-297, Cys-299-Cys-308, Cys-315-Cys-329, Cys-323-Cys-338, Cys-340-Cys-349, Cys-356-Cys-367, Cys-361-Cys-376, Cys-378-Cys-387, Cys-393-Cys-404, Cys-398-Cys-415, Cys-417-Cys-426, Cys-433-Cys-449, Cys-443-Cys-458, Cys-460-Cys-469, Cys-476-Cys-487, Cys-481-Cys-496, Cys-498-Cys-507, Cys-514-Cys-525, Cys-519-Cys-534, Cys-536-Cys-545, Cys-552-Cys-563, Cys-557-Cys-572, Cys-574-Cys-583, Cys-590-Cys-601, Cys-595-Cys-610, Cys-612-Cys-621, Cys-626-Cys-637, Cys-631-Cys-646, Cys-648-Cys-655, Cys-662-Cys-669, Cys-664-Cys-674, Cys-676-Cys-685, Cys-692-Cys-703, Cys-697-Cys-712, Cys-714-Cys-723, Cys-730-Cys-741, Cys-735-Cys-750, Cys-752-Cys-761, Cys-768-Cys-779, Cys-773-Cys-788, Cys-790-Cys-799, Cys-807-Cys-818, Cys-812-Cys-827, Cys-829-Cys-838, Cys-845-Cys-856, Cys-850-Cys-865, Cys-867-Cys-876, Cys-882-Cys-903, Cys-897-Cys-912, Cys-914-Cys-923, Cys-930-Cys-941, Cys-935-Cys-950, Cys-952-Cys-961, Cys-968-Cys-979, Cys-973-Cys-988, Cys-990-Cys-999, Cys-1006-Cys-1019, Cys-1011-Cys-1028, Cys-1030-Cys-1039, Cys-1046-Cys-1057, Cys-1051-Cys-1069, Cys-1071-Cys-1080, Cys-1087-Cys-1098, Cys-1092-Cys-1110, Cys-1112-Cys-1121, Cys-1130-Cys-1142, Cys-1136-Cys-1155, Cys-1157-Cys-1166, Cys-1174-Cys-1187, Cys-1183-Cys-1199, Cys-1210-Cys-1234, Cys-1216-Cys-1229, Cys-1225-Cys-1241, Cys-1247-Cys-1273, Cys-1255-Cys-1268, and Cys-1264-Cys-1280. One can recognise an EGF-like 5; calcium-binding domain in the interval 191 to 229 (DINECFLEPGPCPQGTSCHNTLGSYQCLCPVGQEGPQCK). Residues 231–271 (RKGACPPGSCLNGGTCQLVPEGHSTFHLCLCPPGFTGLDCE) form the EGF-like 6 domain. Residues 273–309 (NPDDCVRHQCQNGATCLDGLDTYTCLCPKTWKGWDCS) enclose the EGF-like 7; calcium-binding domain. Residues 311–350 (DIDECEARGPPRCRNGGTCQNTAGSFHCVCVSGWGGAGCE) form the EGF-like 8; calcium-binding domain. In terms of domain architecture, EGF-like 9; calcium-binding spans 352 to 388 (NLDDCAAATCAPGSTCIDRVGSFSCLCPPGRTGLLCH). Residues 389–427 (LEDMCLSQPCHVNAQCSTNPLTGSTLCICQPGYSGSTCH) enclose the EGF-like 10 domain. Residues 429 to 470 (DLDECQMAQQGPSPCEHGGSCINTPGSFNCLCLPGYTGSRCE) form the EGF-like 11; calcium-binding domain. The EGF-like 12; calcium-binding domain maps to 472-508 (DHNECLSQPCHPGSTCLDLLATFHCLCPPGLEGRLCE). Residues 510-546 (EVNECTSNPCLNQAACHDLLNGFQCLCLPGFTGARCE) form the EGF-like 13; calcium-binding domain. Residues 548-584 (DMDECSSTPCANGGRCRDQPGAFYCECLPGFEGPHCE) form the EGF-like 14; calcium-binding domain. In terms of domain architecture, EGF-like 15; calcium-binding spans 586-622 (EVDECLSDPCPVGASCLDLPGAFFCLCRPGFTGQLCE). EGF-like domains lie at 623–656 (VPLCTPNMCQPGQQCQGQEHRAPCLCPDGSPGCV), 658–686 (AEDNCPCHHGHCQRSLCVCDEGWTGPECE), 688–724 (ELGGCISTPCAHGGTCHPQPSGYNCTCPAGYMGLTCS), 726–762 (EVTACHSGPCLNGGSCSIRPEGYSCTCLPSHTGRHCQ), 764–800 (AVDHCVSASCLNGGTCVNKPGTFFCLCATGFQGLHCE), 803–839 (TNPSCADSPCRNKATCQDTPRGARCLCSPGYTGSSCQ), 841–877 (LIDLCARKPCPHTARCLQSGPSFQCLCLQGWTGALCD), 878–924 (FPLS…KLCQ), 926–962 (NVNPCEPNPCHHGSTCVPQPSGYVCQCAPGYEGQNCS), 964–1000 (VLDACQSQPCHNHGTCTSRPGGFHCACPPGFVGLRCE), 1002–1040 (DVDECLDRPCHPSGTAACHSLANAFYCQCLPGHTGQRCE), 1042–1081 (EMDLCQSQPCSNGGSCEITTGPPPGFTCHCPKGFEGPTCS), 1083–1122 (KALSCGIHHCHNGGLCLPSPKPGSPPLCACLSGFGGPDCL), and 1126–1167 (APPG…PRCQ). Residue Asn-711 is glycosylated (N-linked (GlcNAc...) asparagine). Asn-960 carries an N-linked (GlcNAc...) asparagine glycan. Asn-1139 is a glycosylation site (N-linked (GlcNAc...) asparagine). 3 LNR repeats span residues 1166-1209 (CQRP…PWKG), 1210-1241 (CPPHSQCWLLFRDGRCHPQCDSEECLFDGYDC), and 1247-1287 (CIPA…GEDS). Positions 1345-1369 (EELSGARDSSSWERQAPPTQPLGKE) are disordered. Residues 1444-1464 (PILCSPVVGVLLLALGALLVL) traverse the membrane as a helical segment. Over 1465 to 1964 (QLIRRRRREH…PLNSVVRNLN (500 aa)) the chain is Cytoplasmic. The disordered stretch occupies residues 1516-1535 (VDEDGVAMCSGPEEGEAEET). ANK repeat units follow at residues 1628–1657 (TGETPLHLAARFSRPTAARRLLEAGANPNQ), 1661–1691 (AGRTPLHTAVAADAREVCQLLLASRQTTVDA), 1695–1724 (DGTTPLMLAARLAVEDLVEELIAARADVGA), 1728–1757 (RGKTALHWAAAVNNARAARSLLQAGADKDA), and 1761–1790 (REQTPLFLAAREGAVEVAQLLLELGAARGL). The interval 1879–1907 (RSGSCGGPTTRGRRFSAGSRGRRGARASQ) is disordered.

Belongs to the NOTCH family. As to quaternary structure, heterodimer of a C-terminal fragment N(TM) and a N-terminal fragment N(EC) which are probably linked by disulfide bonds. Interacts with MAML1, MAML2 and MAML3 which act as transcriptional coactivators for NOTCH4. In terms of processing, synthesized in the endoplasmic reticulum as an inactive form which is proteolytically cleaved by a furin-like convertase in the trans-Golgi network before it reaches the plasma membrane to yield an active, ligand-accessible form. Cleavage results in a C-terminal fragment N(TM) and a N-terminal fragment N(EC). Following ligand binding, it is cleaved by TNF-alpha converting enzyme (TACE) to yield a membrane-associated intermediate fragment called notch extracellular truncation (NEXT). This fragment is then cleaved by presenilin dependent gamma-secretase to release a notch-derived peptide containing the intracellular domain (NICD) from the membrane. Phosphorylated. In terms of tissue distribution, highly expressed in lung, moderately in heart kidney, and at lower levels in the ovary and skeletal muscle. A very low expression is seen in the brain, intestine, liver and testis.

The protein localises to the cell membrane. Its subcellular location is the nucleus. Functions as a receptor for membrane-bound ligands Jagged1, Jagged2 and Delta1 to regulate cell-fate determination. Upon ligand activation through the released notch intracellular domain (NICD) it forms a transcriptional activator complex with RBPJ/RBPSUH and activates genes of the enhancer of split locus. Affects the implementation of differentiation, proliferation and apoptotic programs. May regulate branching morphogenesis in the developing vascular system. The protein is Neurogenic locus notch homolog protein 4 of Mus musculus (Mouse).